Reading from the N-terminus, the 151-residue chain is SsrA-binding protein (151 aa).

Belongs to the SmpB family.

Its subcellular location is the cytoplasm. In terms of biological role, required for rescue of stalled ribosomes mediated by trans-translation. Binds to transfer-messenger RNA (tmRNA), required for stable association of tmRNA with ribosomes. tmRNA and SmpB together mimic tRNA shape, replacing the anticodon stem-loop with SmpB. tmRNA is encoded by the ssrA gene; the 2 termini fold to resemble tRNA(Ala) and it encodes a 'tag peptide', a short internal open reading frame. During trans-translation Ala-aminoacylated tmRNA acts like a tRNA, entering the A-site of stalled ribosomes, displacing the stalled mRNA. The ribosome then switches to translate the ORF on the tmRNA; the nascent peptide is terminated with the 'tag peptide' encoded by the tmRNA and targeted for degradation. The ribosome is freed to recommence translation, which seems to be the essential function of trans-translation. The chain is SsrA-binding protein from Chlamydia trachomatis serovar A (strain ATCC VR-571B / DSM 19440 / HAR-13).